We begin with the raw amino-acid sequence, 130 residues long: Large ribosomal subunit protein bL19 (130 aa).

It belongs to the bacterial ribosomal protein bL19 family.

This protein is located at the 30S-50S ribosomal subunit interface and may play a role in the structure and function of the aminoacyl-tRNA binding site. The sequence is that of Large ribosomal subunit protein bL19 from Psychrobacter arcticus (strain DSM 17307 / VKM B-2377 / 273-4).